An 871-amino-acid polypeptide reads, in one-letter code: DNA mismatch repair protein MutS (871 aa).

620–627 (GPNMGGKS) contributes to the ATP binding site. Residues 806–837 (HHGGLNEPKQATMELTPPPEAIPSHTEKRNPL) are disordered.

It belongs to the DNA mismatch repair MutS family.

This protein is involved in the repair of mismatches in DNA. It is possible that it carries out the mismatch recognition step. This protein has a weak ATPase activity. This Idiomarina loihiensis (strain ATCC BAA-735 / DSM 15497 / L2-TR) protein is DNA mismatch repair protein MutS.